The primary structure comprises 185 residues: Casparian strip membrane protein 2 (185 aa).

Residues Met1–Ser25 are Cytoplasmic-facing. A helical transmembrane segment spans residues Val26 to Met46. Over Gly47–Lys73 the chain is Extracellular. Residues Phe74 to Ile94 traverse the membrane as a helical segment. At Phe95 to Arg106 the chain is on the cytoplasmic side. Residues Val107 to Ala127 traverse the membrane as a helical segment. The Extracellular portion of the chain corresponds to Ala128–Ser160. Asn138 is a glycosylation site (N-linked (GlcNAc...) asparagine). A helical transmembrane segment spans residues Leu161–Ala181. The Cytoplasmic portion of the chain corresponds to Leu182–Arg185.

This sequence belongs to the Casparian strip membrane proteins (CASP) family. In terms of assembly, homodimer and heterodimers.

It is found in the cell membrane. Regulates membrane-cell wall junctions and localized cell wall deposition. Required for establishment of the Casparian strip membrane domain (CSD) and the subsequent formation of Casparian strips, a cell wall modification of the root endodermis that determines an apoplastic barrier between the intraorganismal apoplasm and the extraorganismal apoplasm and prevents lateral diffusion. This chain is Casparian strip membrane protein 2, found in Solanum demissum (Wild potato).